Consider the following 501-residue polypeptide: Spore development regulator VOSA (501 aa).

3 disordered regions span residues 26-55 (GQFGDPNLTPPQAETQMSAQASAQAVGQEP), 67-88 (PQRARVAQGKEKGTDRKPIDPP), and 228-274 (AMTT…DTRG). Residues 35-50 (PPQAETQMSAQASAQA) are compositionally biased toward polar residues. Residues 52 to 223 (GQEPEPDYKL…SDQGVRLRVR (172 aa)) form the Velvet domain. Basic and acidic residues-rich tracts occupy residues 67–85 (PQRARVAQGKEKGTDRKPI) and 237–252 (QHAEVAKKHSEWDRKQ). Polar residues predominate over residues 253 to 271 (TSAVSRHSSINENDSTPTD). The Nuclear localization signal signature appears at 364–371 (MSSHHGYT). Disordered regions lie at residues 378-455 (FAPH…QQTP) and 474-501 (PGQLVGTSAPSPHLGQGYRHGMINEPGA).

This sequence belongs to the velvet family. VosA subfamily. As to quaternary structure, forms a heterodimeric complex with VELB; the formation of the VELB-VOSA complex is light-dependent.

It is found in the nucleus. Its function is as follows. Component of the VELB-VOSA heterodimeric complex that plays a dual role in activating genes associated with spore maturation and repressing certain development-associated genes. The complex binds DNA through the DNA-binding domain of VOSA that recognizes an 11-nucleotide consensus sequence 5'-CTGGCCGCGGC-3' consisting of two motifs in the promoters of key developmental regulatory genes. Appears dispensable for the development and pathogenicity. This chain is Spore development regulator VOSA, found in Pyricularia oryzae (strain 70-15 / ATCC MYA-4617 / FGSC 8958) (Rice blast fungus).